We begin with the raw amino-acid sequence, 272 residues long: Large ribosomal subunit protein uL2 (272 aa).

The segment at 222-272 (GTAMNPVDHPHGGGEGRNFGKHPVSPWGKKTKGKKTRNNRLTDKFIVHRRS) is disordered. The span at 250-259 (KKTKGKKTRN) shows a compositional bias: basic residues. A compositionally biased stretch (basic and acidic residues) spans 261–272 (RLTDKFIVHRRS).

Belongs to the universal ribosomal protein uL2 family. Part of the 50S ribosomal subunit. Forms a bridge to the 30S subunit in the 70S ribosome.

Functionally, one of the primary rRNA binding proteins. Required for association of the 30S and 50S subunits to form the 70S ribosome, for tRNA binding and peptide bond formation. It has been suggested to have peptidyltransferase activity; this is somewhat controversial. Makes several contacts with the 16S rRNA in the 70S ribosome. This Baumannia cicadellinicola subsp. Homalodisca coagulata protein is Large ribosomal subunit protein uL2.